Consider the following 434-residue polypeptide: APETALA2-like protein 2 (434 aa).

A disordered region spans residues 1–116 (MLLDLNVESP…KTRRGPRSRS (116 aa)). Positions 12-23 (RSGTSSSSVLNS) are enriched in low complexity. A compositionally biased stretch (gly residues) spans 25-38 (DAGGGGGGGGGGGL). Positions 72–87 (LPPPPPAAPSPAPAWQ) are enriched in pro residues. A compositionally biased stretch (basic residues) spans 104–113 (VAKKTRRGPR). Residues 106–115 (KKTRRGPRSR) carry the Nuclear localization signal motif. DNA-binding regions (AP2/ERF) lie at residues 118-174 (QYRG…INFN) and 210-267 (KFRG…TNFE). Positions 291-295 (LDLRI) match the EAR motif.

The protein belongs to the AP2/ERF transcription factor family. AP2 subfamily. May form homodimer. Interacts with TPR2/ASP1. In terms of tissue distribution, highly expressed in developing panicles and in young seedlings. Present at low levels at all developmental stages.

The protein resides in the nucleus. Probable transcription factor. Involved in spikelet transition. Together with SNB, controls synergistically inflorescence architecture and floral meristem establishment via the regulation of spatio-temporal expression of B- and E-function floral organ identity genes in the lodicules and of spikelet meristem genes. Prevents lemma and palea elongation as well as grain growth. This is APETALA2-like protein 2 from Oryza sativa subsp. japonica (Rice).